Consider the following 835-residue polypeptide: BCL11 transcription factor A (835 aa).

A compositionally biased stretch (basic residues) spans 1–12 (MSRRKQGKPQHL). Residues 1–41 (MSRRKQGKPQHLSKREFSPEPLEAILTDDEPDHGPLGAPEG) form a disordered region. Positions 1–210 (MSRRKQGKPQ…SEHGSPLTPR (210 aa)) are required for nuclear body formation and for SUMO1 recruitment. The segment at 45 to 71 (LLTCGQCQMNFPLGDILIFIEHKRKQC) adopts a C2HC-type zinc-finger fold. C48, C51, H66, and C71 together coordinate Zn(2+). Position 86 is a phosphoserine (S86). Glycyl lysine isopeptide (Lys-Gly) (interchain with G-Cter in SUMO2) cross-links involve residues K123 and K164. The segment at 170-193 (YTCTTCKQPFTSAWFLLQHAQNTH) adopts a C2H2-type 1 zinc-finger fold. S205 carries the post-translational modification Phosphoserine. Asymmetric dimethylarginine is present on R271. The segment at 323 to 376 (AGNTSSPPLSPGRPSPMQRLLQPFQPGSKPPFLATPPLPPLQSAPPPSQPPVKS) is disordered. 2 positions are modified to phosphoserine: S332 and S337. A compositionally biased stretch (pro residues) spans 355 to 372 (LATPPLPPLQSAPPPSQP). 2 C2H2-type zinc fingers span residues 377-399 (KSCEFCGKTFKFQSNLVVHRRSH) and 405-429 (YKCNLCDHACTQASKLKRHMKTHMH). Basic residues predominate over residues 421–430 (KRHMKTHMHK). Disordered stretches follow at residues 421–458 (KRHMKTHMHKSSPMTVKSDDGLSTASSPEPGTSDLVGS), 471–512 (KSEN…ERVD), and 572–619 (RGHL…GLSK). Residues 441–450 (GLSTASSPEP) are compositionally biased toward polar residues. Phosphoserine is present on residues S446 and S447. The span at 482-506 (NGDEEEEEDDEEEEEEEEEEEEELT) shows a compositional bias: acidic residues. The segment covering 574–584 (HLAEAEGHRDT) has biased composition (basic and acidic residues). Position 608 is a phosphoserine (S608). A Glycyl lysine isopeptide (Lys-Gly) (interchain with G-Cter in SUMO2) cross-link involves residue K620. Phosphoserine occurs at positions 625 and 630. A Glycyl lysine isopeptide (Lys-Gly) (interchain with G-Cter in SUMO1) cross-link involves residue K634. The tract at residues 678–740 (DSRQSPFASS…GRPSSKEGRR (63 aa)) is disordered. A compositionally biased stretch (low complexity) spans 682–696 (SPFASSSEHSSENGS). T701 bears the Phosphothreonine mark. Gly residues predominate over residues 706-720 (LDGGISGRSGTGSGG). A DNA-binding region spans residues 737 to 835 (EGRRSDTCEY…RVLNNDIKTE (99 aa)). A C2H2-type 4 zinc finger spans residues 742–764 (DTCEYCGKVFKNCSNLTVHRRSH). C744, C747, H760, and H764 together coordinate Zn(2+). Residues 765-769 (TGERP) are disordered. The segment at 770-792 (YKCELCNYACAQSSKLTRHMKTH) adopts a C2H2-type 5 zinc-finger fold. Zn(2+) contacts are provided by C772, C775, H788, and H792. Residues 793-799 (GQVGKDV) are disordered. A C2H2-type 6 zinc finger spans residues 800–823 (YKCEICKMPFSVYSTLEKHMKKWH). The Zn(2+) site is built by C802, C805, H818, and H823. K833 participates in a covalent cross-link: Glycyl lysine isopeptide (Lys-Gly) (interchain with G-Cter in SUMO2).

Homotetrameric; self-associates via C2HC-type zinc finger domain. Interacts with MTA2, a component of the nucleosome remodeling and deacetylase (NuRD) repressor complex. Interacts (via its C2H2-type zinc finger domains 4, 5 and 6) with promoter region of gamma-globulin. Interacts with NR2F1, PIAS3, NR2F2 and NR2F6. Isoform 1, isoform 2 and isoform 3 form homodimers and heterodimers. Isoform 2 interacts with TBR1. In terms of processing, sumoylated with SUMO1. Expressed at high levels in brain, spleen thymus, bone marrow and testis. Expressed in CD34-positive myeloid precursor cells, B-cells, monocytes and megakaryocytes. Expression is tightly regulated during B-cell development. As to expression, expressed in fetal and adult brain, and in the plasmacytoid dendritic cell.

It is found in the cytoplasm. Its subcellular location is the nucleus. It localises to the chromosome. The protein resides in the nucleus matrix. Functionally, transcription factor. Associated with the BAF SWI/SNF chromatin remodeling complex. Binds to the 5'-TGACCA-3' sequence motif in regulatory regions of target genes, including a distal promoter of the HBG1 hemoglobin subunit gamma-1 gene. Involved in regulation of the developmental switch from gamma- to beta-globin, probably via direct repression of HBG1; hence indirectly repressing fetal hemoglobin (HbF) level. Involved in brain development. May play a role in hematopoiesis. Essential factor in lymphopoiesis required for B-cell formation in fetal liver. May function as a modulator of the transcriptional repression activity of NR2F2. This Homo sapiens (Human) protein is BCL11 transcription factor A (BCL11A).